The following is a 305-amino-acid chain: Homoserine O-acetyltransferase (305 aa).

Cys-142 (acyl-thioester intermediate) is an active-site residue. 2 residues coordinate substrate: Lys-163 and Ser-192. The Proton acceptor role is filled by His-235. Residue Glu-237 is part of the active site. Arg-249 contributes to the substrate binding site.

Belongs to the MetA family.

It is found in the cytoplasm. The enzyme catalyses L-homoserine + acetyl-CoA = O-acetyl-L-homoserine + CoA. It functions in the pathway amino-acid biosynthesis; L-methionine biosynthesis via de novo pathway; O-acetyl-L-homoserine from L-homoserine: step 1/1. Transfers an acetyl group from acetyl-CoA to L-homoserine, forming acetyl-L-homoserine. In Phocaeicola vulgatus (strain ATCC 8482 / DSM 1447 / JCM 5826 / CCUG 4940 / NBRC 14291 / NCTC 11154) (Bacteroides vulgatus), this protein is Homoserine O-acetyltransferase.